A 404-amino-acid polypeptide reads, in one-letter code: Pleckstrin homology domain-containing family A member 1 (404 aa).

PH domains are found at residues 7 to 112 and 191 to 289; these read QNRI…KAIK and AVIK…GAIV. Disordered stretches follow at residues 291 to 332 and 355 to 404; these read QRGP…RSNS and NFKV…VSDV. Low complexity predominate over residues 316–332; it reads TNAATATSHSTASRSNS. Serine 332 and serine 362 each carry phosphoserine.

Interacts with MPDZ and PTPN13. As to expression, highly expressed in skeletal muscle, thymus, pancreas, placenta and lung. Detected at low levels in brain, heart, peripheral blood leukocytes, testis, ovary, spinal cord, thyroid, kidney, liver, small intestine and colon.

The protein localises to the cytoplasm. It is found in the cell membrane. It localises to the nucleus. Binds specifically to phosphatidylinositol 3,4-diphosphate (PtdIns3,4P2), but not to other phosphoinositides. May recruit other proteins to the plasma membrane. The chain is Pleckstrin homology domain-containing family A member 1 (PLEKHA1) from Homo sapiens (Human).